We begin with the raw amino-acid sequence, 95 residues long: Small ribosomal subunit protein bS20 (95 aa).

Residues 1-22 (MANIKSQIKRNRTNENNRLRNK) form a disordered region. Residues 12 to 22 (RTNENNRLRNK) show a composition bias toward basic and acidic residues.

It belongs to the bacterial ribosomal protein bS20 family.

In terms of biological role, binds directly to 16S ribosomal RNA. The sequence is that of Small ribosomal subunit protein bS20 from Tropheryma whipplei (strain TW08/27) (Whipple's bacillus).